Consider the following 546-residue polypeptide: Glutathione reductase (546 aa).

The transit peptide at 2 to 46 (YKHRYFHFFFFFFFFLVSTKIIRSFTFLNNNTNLSNPVYFKKKAN) directs the protein to the apicoplast. FAD-binding residues include Ser58 and Gly59. Ser58 serves as a coordination point for glutathione. Position 65 (Arg65) interacts with glutathione. Residues Glu78, Thr85, Cys86, and Lys94 each coordinate FAD. The cysteines at positions 86 and 91 are disulfide-linked. Tyr141 serves as a coordination point for glutathione. Ala157 contacts FAD. Residues Ile233, Glu236, Arg253, Arg259, and Gly318 each contribute to the NADP(+) site. FAD-binding residues include Asp358 and Thr400. Arg408 serves as a coordination point for glutathione. Val430 is an NADP(+) binding site. His531 provides a ligand contact to FAD. Catalysis depends on His531, which acts as the Proton acceptor.

Belongs to the class-I pyridine nucleotide-disulfide oxidoreductase family. In terms of assembly, homodimer. It depends on FAD as a cofactor.

The protein localises to the cytoplasm. It is found in the plastid. It localises to the apicoplast. The enzyme catalyses 2 glutathione + NADP(+) = glutathione disulfide + NADPH + H(+). Its function is as follows. Catalyzes the reduction of glutathione disulfide (GSSG) to reduced glutathione (GSH). Constitutes the major mechanism to maintain a high GSH:GSSG ratio in the cytosol. In Plasmodium falciparum (isolate 3D7), this protein is Glutathione reductase.